The sequence spans 140 residues: Nucleoside diphosphate kinase (140 aa).

ATP is bound by residues lysine 11, phenylalanine 59, arginine 87, threonine 93, arginine 104, and asparagine 114. Histidine 117 (pros-phosphohistidine intermediate) is an active-site residue.

It belongs to the NDK family. In terms of assembly, homotetramer. It depends on Mg(2+) as a cofactor.

Its subcellular location is the cytoplasm. It catalyses the reaction a 2'-deoxyribonucleoside 5'-diphosphate + ATP = a 2'-deoxyribonucleoside 5'-triphosphate + ADP. It carries out the reaction a ribonucleoside 5'-diphosphate + ATP = a ribonucleoside 5'-triphosphate + ADP. In terms of biological role, major role in the synthesis of nucleoside triphosphates other than ATP. The ATP gamma phosphate is transferred to the NDP beta phosphate via a ping-pong mechanism, using a phosphorylated active-site intermediate. This chain is Nucleoside diphosphate kinase, found in Rickettsia bellii (strain OSU 85-389).